The primary structure comprises 42 residues: Delta-hexatoxin-Ar1a (42 aa).

4 disulfide bridges follow: Cys1/Cys15, Cys8/Cys20, Cys14/Cys31, and Cys16/Cys42.

Belongs to the neurotoxin 06 (delta-actx) family. Expressed by the venom gland.

It is found in the secreted. Inhibits tetrodotoxin-sensitive voltage-gated sodium channels (Nav) by binding to site 3. It slows the inactivation, causes a prolongation of action potential duration resulting in repetitive firing in autonomic and motor nerve fibers. Does not depolarize the resting potential. Does not affect tetrodotoxin-resistant sodium channels. This lethal neurotoxin is active on both insect and mammalian voltage-gated sodium channels. The chain is Delta-hexatoxin-Ar1a from Atrax robustus (Sydney funnel-web spider).